Here is a 677-residue protein sequence, read N- to C-terminus: Probable sulfate transporter 4.2 (677 aa).

The Cytoplasmic portion of the chain corresponds to 1–83; sequence MSLAVKDLST…RTYRWHQYFK (83 aa). Residues 84-104 traverse the membrane as a helical segment; sequence LDLMAGITVGIMLVPQAMSYA. The Extracellular portion of the chain corresponds to 105–108; it reads RLAG. A helical membrane pass occupies residues 109 to 129; the sequence is LQPIYGLYSSFVPVFVYAVFG. Residues 130–133 lie on the Cytoplasmic side of the membrane; sequence SSRQ. A helical membrane pass occupies residues 134-154; sequence LAVGPVALVSLLVSNALSGIV. Residues 155-161 lie on the Extracellular side of the membrane; it reads DPSEELY. A helical transmembrane segment spans residues 162–182; it reads TELAILLALMVGIFESIMGFL. The Cytoplasmic segment spans residues 183 to 189; that stretch reads RLGWLIR. The helical transmembrane segment at 190 to 210 threads the bilayer; sequence FISHSVISGFTTASAVVIGLS. Over 211 to 241 the chain is Extracellular; that stretch reads QLKYFLGYSVSRSSKIMPVIDSIIAGADQFK. A helical transmembrane segment spans residues 242-262; the sequence is WPPFLLGCTILVILLVMKHVG. Over 263–269 the chain is Cytoplasmic; it reads KAKKELR. Residues 270-290 traverse the membrane as a helical segment; the sequence is FIRAAGPLTGLALGTIIAKVF. The Extracellular portion of the chain corresponds to 291–318; the sequence is HPPSITLVGDIPQGLPKFSFPKSFDHAK. The chain crosses the membrane as a helical span at residues 319 to 339; the sequence is LLLPTSALITGVAILESVGIA. Residues 340 to 355 are Cytoplasmic-facing; it reads KALAAKNRYELDSNSE. The chain crosses the membrane as a helical span at residues 356–376; the sequence is LFGLGVANIFGSLFSAYPTTG. At 377–392 the chain is on the extracellular side; that stretch reads SFSRSAVNSESEAKTG. The helical transmembrane segment at 393 to 413 threads the bilayer; the sequence is LSGLVTGIIIGCSLLFLTPMF. Over 414–420 the chain is Cytoplasmic; the sequence is KFIPQCA. Residues 421–441 traverse the membrane as a helical segment; the sequence is LAAIVISAVSGLVDYEGAIFL. The Extracellular portion of the chain corresponds to 442–459; that stretch reads WRVDKRDFTLWTITSTTT. A helical transmembrane segment spans residues 460–480; the sequence is LFFGIEIGVLIGVGFSLAFVI. Topologically, residues 481-677 are cytoplasmic; the sequence is HESANPHIAV…LEEPLLSREK (197 aa). Residues 505-629 form the STAS domain; that stretch reads QYPEAYTYNG…VRVHDAVQVC (125 aa).

It belongs to the SLC26A/SulP transporter (TC 2.A.53) family.

It is found in the membrane. Its function is as follows. H(+)/sulfate cotransporter that may play a role in the regulation of sulfate assimilation. This is Probable sulfate transporter 4.2 (SULTR4;2) from Arabidopsis thaliana (Mouse-ear cress).